The primary structure comprises 328 residues: GTP cyclohydrolase MptA (328 aa).

The protein belongs to the GTP cyclohydrolase IV family. In terms of assembly, homodimer. Requires Fe(2+) as cofactor.

It catalyses the reaction GTP + H2O = 7,8-dihydroneopterin 2',3'-cyclic phosphate + formate + diphosphate + H(+). Its pathway is cofactor biosynthesis; 5,6,7,8-tetrahydromethanopterin biosynthesis. In terms of biological role, converts GTP to 7,8-dihydro-D-neopterin 2',3'-cyclic phosphate, the first intermediate in the biosynthesis of coenzyme methanopterin. The sequence is that of GTP cyclohydrolase MptA from Methanospirillum hungatei JF-1 (strain ATCC 27890 / DSM 864 / NBRC 100397 / JF-1).